The primary structure comprises 675 residues: Protein C-mannosyl-transferase DPY19L1 (675 aa).

The disordered stretch occupies residues 1-22 (MEGRPPPEGRPPPRPRTGRAPR). Helical transmembrane passes span 66 to 88 (LYYSYFKTIVEAPSFLNGVWMIM), 156 to 176 (ACFYVAVIFILNGLMMALFFI), 186 to 208 (LGGLVTVLCFFFNHGECTRVMWT), 236 to 254 (LYRGSLIALCISNVFFMLP), 260 to 279 (FVLLTQIASLFAVYVVGYID), 286 to 303 (IIYIHMISLALCFVLMFG), 309 to 325 (TSYYASSLVIIWGILAM), 334 to 354 (VSELSLWVIQGCFWLFGTVIL), 414 to 434 (VVLVVFVAIVRKIISDMWGVL), 449 to 469 (GELVYHALQLLAYTALGILIM), and 491 to 511 (LFGWLFCKVHPGAIVFAILAA).

This sequence belongs to the dpy-19 family. As to expression, widely expressed.

The protein resides in the endoplasmic reticulum membrane. The catalysed reaction is L-tryptophyl-[protein] + a di-trans,poly-cis-dolichyl beta-D-mannosyl phosphate = C-alpha-D-mannosyl-L-tryptophyl-[protein] + a di-trans,poly-cis-dolichyl phosphate + H(+). It functions in the pathway protein modification; protein glycosylation. Its function is as follows. C-mannosyltransferase that mediates the C-mannosylation tryptophan residues on target proteins. The reaction occurs on the luminal side of the endoplasmic reticulum and involves the transfer of a mannose unit from a dolichylphosphate mannose (Dol-P-Man) donor to an acceptor protein containing a WxxW consensus sequence. C-mannosylates the first two tryptophans in the WxxWxxWxxC motif in thrombospondin (TSP) type-1 of UNC5A. Regulates neurite extension during development. This chain is Protein C-mannosyl-transferase DPY19L1 (DPY19L1), found in Homo sapiens (Human).